Reading from the N-terminus, the 614-residue chain is Putative N(6)-adenosine-methyltransferase MT-A70-like (614 aa).

The tract at residues 59-78 is disordered; it reads TPPLTNFNPPKSSSLQQLPQ. The span at 67 to 78 shows a compositional bias: low complexity; the sequence is PPKSSSLQQLPQ. S-adenosyl-L-methionine-binding positions include 391-392 and aspartate 409; that span reads DI. The segment at 479–492 is positively charged region required for RNA-binding; it reads RIIRTGRTGHWLNH. S-adenosyl-L-methionine-binding positions include lysine 526, 549-552, and 562-563; these read RMHN and NQ. The disordered stretch occupies residues 589 to 614; that stretch reads PASPSRASAMELDSSVAAQTTTSAMM. The segment covering 604–614 has biased composition (polar residues); that stretch reads VAAQTTTSAMM.

This sequence belongs to the MT-A70-like family.

It localises to the nucleus. It catalyses the reaction an adenosine in mRNA + S-adenosyl-L-methionine = an N(6)-methyladenosine in mRNA + S-adenosyl-L-homocysteine + H(+). Putative N6-methyltransferase that methylates adenosine residues of some mRNAs. N6-methyladenosine (m6A), which is present at internal sites of some mRNAs, may play a role in the efficiency of mRNA splicing, transport or translation. The polypeptide is Putative N(6)-adenosine-methyltransferase MT-A70-like (Medicago truncatula (Barrel medic)).